Consider the following 456-residue polypeptide: uncharacterized protein (456 aa).

The 59-residue stretch at 3–61 (TIKKNEVKTGKVIDLTHEGHGVVKVDRYPIFIPNALIDEEIKFKLIKVKKNFAIGKLIE) folds into the TRAM domain. Residues C74, C80, C83, and C162 each coordinate [4Fe-4S] cluster. The S-adenosyl-L-methionine site is built by Q286, Y315, E336, and D384. Catalysis depends on C411, which acts as the Nucleophile.

This sequence belongs to the class I-like SAM-binding methyltransferase superfamily. RNA M5U methyltransferase family.

This is an uncharacterized protein from Staphylococcus epidermidis (strain ATCC 35984 / DSM 28319 / BCRC 17069 / CCUG 31568 / BM 3577 / RP62A).